Reading from the N-terminus, the 301-residue chain is 4-diphosphocytidyl-2-C-methyl-D-erythritol kinase (301 aa).

Lysine 18 is an active-site residue. Residue 103–113 participates in ATP binding; it reads PVAAGIGGGSA. The active site involves aspartate 145.

This sequence belongs to the GHMP kinase family. IspE subfamily.

The enzyme catalyses 4-CDP-2-C-methyl-D-erythritol + ATP = 4-CDP-2-C-methyl-D-erythritol 2-phosphate + ADP + H(+). It participates in isoprenoid biosynthesis; isopentenyl diphosphate biosynthesis via DXP pathway; isopentenyl diphosphate from 1-deoxy-D-xylulose 5-phosphate: step 3/6. Its function is as follows. Catalyzes the phosphorylation of the position 2 hydroxy group of 4-diphosphocytidyl-2C-methyl-D-erythritol. This chain is 4-diphosphocytidyl-2-C-methyl-D-erythritol kinase, found in Bradyrhizobium sp. (strain BTAi1 / ATCC BAA-1182).